The following is a 736-amino-acid chain: Dynamin-1-like protein (736 aa).

The residue at position 1 (Met-1) is an N-acetylmethionine. Residues 22–302 (IIQLPQIVVV…LMHHIRDCLP (281 aa)) form the Dynamin-type G domain. The G1 motif stretch occupies residues 32 to 39 (GTQSSGKS). 32–40 (GTQSSGKSS) contributes to the GTP binding site. The G2 motif stretch occupies residues 58 to 60 (VTR). Residues 146-149 (DLPG) are G3 motif. The tract at residues 215 to 218 (TKLD) is G4 motif. GTP-binding positions include 215–221 (TKLDLMD) and 246–249 (NRSQ). Residues 245-248 (VNRS) form a G5 motif region. Positions 344–489 (YCNTIEGTAK…NEMVHNLVAI (146 aa)) are middle domain. Residues 448-685 (NYSTQELLRF…NHVKDTLQSE (238 aa)) are interaction with GSK3B. Residues 502-569 (ADACGLMNNN…IQDNRRETKN (68 aa)) form a b domain region. The interval 522 to 554 (RELPSAGSRDKSSKVPSALAPASQEPPPAASAE) is disordered. Ser-529 is modified (phosphoserine). Glycyl lysine isopeptide (Lys-Gly) (interchain with G-Cter in SUMO) cross-links involve residues Lys-532, Lys-535, Lys-558, and Lys-568. The segment at 542–736 (PASQEPPPAA…IAEIRETHLW (195 aa)) is C-terminal dimerization domain. The tract at residues 566 to 588 (ETKNVPSAGGGIGDGGQEPTTGN) is disordered. O-linked (GlcNAc) threonine glycans are attached at residues Thr-585 and Thr-586. A Glycyl lysine isopeptide (Lys-Gly) (interchain with G-Cter in SUMO) cross-link involves residue Lys-594. The residue at position 597 (Lys-597) is an N6-acetyllysine; alternate. Lys-597 participates in a covalent cross-link: Glycyl lysine isopeptide (Lys-Gly) (interchain with G-Cter in SUMO); alternate. Lys-606 participates in a covalent cross-link: Glycyl lysine isopeptide (Lys-Gly) (interchain with G-Cter in SUMO). Ser-607 carries the phosphoserine modification. Lys-608 participates in a covalent cross-link: Glycyl lysine isopeptide (Lys-Gly) (interchain with G-Cter in SUMO). Ser-616 bears the Phosphoserine; by PINK1 mark. The residue at position 637 (Ser-637) is a Phosphoserine; by CAMK1 and PKA. An S-nitrosocysteine modification is found at Cys-644. A GED domain is found at 644–735 (CEVIERLIKS…IIAEIRETHL (92 aa)). The tract at residues 654–668 (YFLIVRKNIQDSVPK) is important for homodimerization.

It belongs to the TRAFAC class dynamin-like GTPase superfamily. Dynamin/Fzo/YdjA family. In terms of assembly, homotetramer; dimerizes through the N-terminal GTP-middle region of one molecule binding to the GED domain of another DNM1L molecule. Oligomerizes in a GTP-dependent manner to form membrane-associated tubules with a spiral pattern. Interacts with GSK3B and MARCHF5. Interacts (via the GTPase and B domains) with UBE2I; the interaction promotes sumoylation of DNM1L, mainly in its B domain. Interacts with PPP3CA; the interaction dephosphorylates DNM1L and regulates its transition to mitochondria. Interacts with BCL2L1 isoform BCL-X(L) and CLTA; DNM1L and BCL2L1 isoform BCL-X(L) may form a complex in synaptic vesicles that also contains clathrin and MFF. Interacts with MFF; the interaction is inhibited by C11orf65/MFI. Interacts with FIS1. Interacts with MIEF2 and MIEF1; GTP-dependent, regulates GTP hydrolysis and DNM1L oligomerization. Interacts with PGAM5; this interaction leads to dephosphorylation at Ser-656 and activation of GTPase activity and eventually to mitochondria fragmentation. Interacts with RALBP1; during mitosis, recruits DNM1L to the mitochondrion and mediates its activation by the mitotic kinase cyclin B-CDK1. Interacts with FUNDC1; this interaction recruits DNM1L/DRP1 at ER-mitochondria contact sites. Post-translationally, phosphorylation/dephosphorylation events on two sites near the GED domain regulate mitochondrial fission. Phosphorylation on Ser-637 inhibits mitochondrial fission probably through preventing intramolecular interaction. Dephosphorylated on this site by PPP3CA which promotes mitochondrial fission. Phosphorylation on Ser-616 by Pink1 activates the GTPase activity and promotes mitochondrial fission. Phosphorylated in a circadian manner at Ser-637. Dephosphorylated by PGAM5. Sumoylated on various lysine residues within the B domain, probably by MUL1. Sumoylation positively regulates mitochondrial fission. Desumoylated by SENP5 during G2/M transition of mitosis. Appears to be linked to its catalytic activity. In terms of processing, S-nitrosylation increases DNM1L dimerization, mitochondrial fission and causes neuronal damage. Post-translationally, O-GlcNAcylation augments the level of the GTP-bound active form of DNM1L and induces translocation from the cytoplasm to mitochondria in cardiomyocytes. It also decreases phosphorylation at Ser-637. Ubiquitination by MARCHF5 affects mitochondrial morphology. As to expression, expressed in the cerebellum and in several regions of the cerebrum and diencephalon. Strongly expressed in the cerebellar Purkinje cells and in the pontile giant neurons. In terms of tissue distribution, widely expressed. Brain-specific. As to expression, brain-specific (at protein level). Expressed in most of the subregions of the brain, including the cerebellum, midbrain, hippocampus, striatum, cerebral cortex, and brain stem. Weakly expressed in the olfactory bulb.

It localises to the cytoplasm. The protein resides in the cytosol. The protein localises to the golgi apparatus. Its subcellular location is the endomembrane system. It is found in the mitochondrion outer membrane. It localises to the peroxisome. The protein resides in the membrane. The protein localises to the clathrin-coated pit. Its subcellular location is the cytoplasmic vesicle. It is found in the secretory vesicle. It localises to the synaptic vesicle membrane. The protein resides in the lysosome. The protein localises to the late endosome. Its subcellular location is the cell membrane. It is found in the postsynaptic density. It catalyses the reaction GTP + H2O = GDP + phosphate + H(+). Functionally, functions in mitochondrial and peroxisomal division. Mediates membrane fission through oligomerization into membrane-associated tubular structures that wrap around the scission site to constrict and sever the mitochondrial membrane through a GTP hydrolysis-dependent mechanism. The specific recruitment at scission sites is mediated by membrane receptors like MFF, MIEF1 and MIEF2 for mitochondrial membranes. While the recruitment by the membrane receptors is GTP-dependent, the following hydrolysis of GTP induces the dissociation from the receptors and allows DNM1L filaments to curl into closed rings that are probably sufficient to sever a double membrane. Acts downstream of PINK1 to promote mitochondrial fission in a PRKN-dependent manner. Plays an important role in mitochondrial fission during mitosis. Required for formation of endocytic vesicles. Through its function in mitochondrial division, ensures the survival of at least some types of postmitotic neurons, including Purkinje cells, by suppressing oxidative damage. Required for normal brain development, including that of cerebellum. Facilitates developmentally regulated apoptosis during neural tube formation. Required for a normal rate of cytochrome c release and caspase activation during apoptosis; this requirement may depend upon the cell type and the physiological apoptotic cues. Proposed to regulate synaptic vesicle membrane dynamics through association with BCL2L1 isoform Bcl-X(L) which stimulates its GTPase activity in synaptic vesicles; the function may require its recruitment by MFF to clathrin-containing vesicles. Required for programmed necrosis execution. Rhythmic control of its activity following phosphorylation at Ser-637 is essential for the circadian control of mitochondrial ATP production. Its function is as follows. Regulates postsynaptic clathrin-mediated endocytosis by positioning the endocytic zone at the postsynaptic density, independently of mitochondrial division. The protein is Dynamin-1-like protein of Mus musculus (Mouse).